The following is a 363-amino-acid chain: Alanine racemase (363 aa).

The active-site Proton acceptor; specific for D-alanine is lysine 39. Lysine 39 bears the N6-(pyridoxal phosphate)lysine mark. Residue arginine 134 coordinates substrate. Tyrosine 251 (proton acceptor; specific for L-alanine) is an active-site residue. Residue methionine 299 coordinates substrate.

This sequence belongs to the alanine racemase family. Pyridoxal 5'-phosphate is required as a cofactor.

It carries out the reaction L-alanine = D-alanine. Its pathway is amino-acid biosynthesis; D-alanine biosynthesis; D-alanine from L-alanine: step 1/1. Functionally, catalyzes the interconversion of L-alanine and D-alanine. May also act on other amino acids. In Thermodesulfovibrio yellowstonii (strain ATCC 51303 / DSM 11347 / YP87), this protein is Alanine racemase (alr).